Reading from the N-terminus, the 334-residue chain is Phosphate acyltransferase (334 aa).

This sequence belongs to the PlsX family. Homodimer. Probably interacts with PlsY.

It localises to the cytoplasm. The enzyme catalyses a fatty acyl-[ACP] + phosphate = an acyl phosphate + holo-[ACP]. Its pathway is lipid metabolism; phospholipid metabolism. In terms of biological role, catalyzes the reversible formation of acyl-phosphate (acyl-PO(4)) from acyl-[acyl-carrier-protein] (acyl-ACP). This enzyme utilizes acyl-ACP as fatty acyl donor, but not acyl-CoA. The chain is Phosphate acyltransferase from Caldicellulosiruptor bescii (strain ATCC BAA-1888 / DSM 6725 / KCTC 15123 / Z-1320) (Anaerocellum thermophilum).